Consider the following 228-residue polypeptide: Immunogenic protein MPB64 (228 aa).

The first 23 residues, 1 to 23 (MRIKIFMLVTAVVLLCCSGVATA), serve as a signal peptide directing secretion.

It belongs to the RsiV family.

The protein resides in the secreted. This chain is Immunogenic protein MPB64 (mpb64), found in Mycobacterium bovis (strain ATCC BAA-935 / AF2122/97).